We begin with the raw amino-acid sequence, 452 residues long: Mitochondrial import inner membrane translocase subunit TIM44 (452 aa).

Position 128 is a phosphothreonine (Thr128). 166–173 (SGEKLGKT) provides a ligand contact to ATP. Lys177 carries the N6-succinyllysine modification. Ser180 bears the Phosphoserine mark. Lys217 is modified (N6-succinyllysine).

The protein belongs to the Tim44 family. Probable component of the PAM complex at least composed of a mitochondrial HSP70 protein, GRPEL1 or GRPEL2, TIMM44, TIMM16/PAM16 and TIMM14/DNAJC19. The complex interacts with the TIMM23 component of the TIM23 complex. Interacts with SLC25A4/ANT1 and SLC25A5/ANT2; leading to inhibit the presequence translocase TIMM23, thereby promoting stabilization of PINK1.

The protein resides in the mitochondrion inner membrane. Its function is as follows. Essential component of the PAM complex, a complex required for the translocation of transit peptide-containing proteins from the inner membrane into the mitochondrial matrix in an ATP-dependent manner. Recruits mitochondrial HSP70 to drive protein translocation into the matrix using ATP as an energy source. The chain is Mitochondrial import inner membrane translocase subunit TIM44 (Timm44) from Mus musculus (Mouse).